We begin with the raw amino-acid sequence, 175 residues long: ATP synthase subunit delta (175 aa).

Belongs to the ATPase delta chain family. As to quaternary structure, F-type ATPases have 2 components, F(1) - the catalytic core - and F(0) - the membrane proton channel. F(1) has five subunits: alpha(3), beta(3), gamma(1), delta(1), epsilon(1). F(0) has three main subunits: a(1), b(2) and c(10-14). The alpha and beta chains form an alternating ring which encloses part of the gamma chain. F(1) is attached to F(0) by a central stalk formed by the gamma and epsilon chains, while a peripheral stalk is formed by the delta and b chains.

Its subcellular location is the cell inner membrane. Functionally, f(1)F(0) ATP synthase produces ATP from ADP in the presence of a proton or sodium gradient. F-type ATPases consist of two structural domains, F(1) containing the extramembraneous catalytic core and F(0) containing the membrane proton channel, linked together by a central stalk and a peripheral stalk. During catalysis, ATP synthesis in the catalytic domain of F(1) is coupled via a rotary mechanism of the central stalk subunits to proton translocation. Its function is as follows. This protein is part of the stalk that links CF(0) to CF(1). It either transmits conformational changes from CF(0) to CF(1) or is implicated in proton conduction. The sequence is that of ATP synthase subunit delta from Xanthomonas axonopodis pv. citri (strain 306).